The chain runs to 279 residues: Pantothenate synthetase (279 aa).

26-33 (MGNLHEGH) serves as a coordination point for ATP. The active-site Proton donor is the H33. Residue Q57 coordinates (R)-pantoate. Q57 lines the beta-alanine pocket. 144–147 (GKKD) contributes to the ATP binding site. Position 150 (Q150) interacts with (R)-pantoate. Residues V173 and 181–184 (LSSR) contribute to the ATP site.

The protein belongs to the pantothenate synthetase family. As to quaternary structure, homodimer.

The protein localises to the cytoplasm. The enzyme catalyses (R)-pantoate + beta-alanine + ATP = (R)-pantothenate + AMP + diphosphate + H(+). Its pathway is cofactor biosynthesis; (R)-pantothenate biosynthesis; (R)-pantothenate from (R)-pantoate and beta-alanine: step 1/1. Functionally, catalyzes the condensation of pantoate with beta-alanine in an ATP-dependent reaction via a pantoyl-adenylate intermediate. The sequence is that of Pantothenate synthetase from Burkholderia ambifaria (strain ATCC BAA-244 / DSM 16087 / CCUG 44356 / LMG 19182 / AMMD) (Burkholderia cepacia (strain AMMD)).